A 355-amino-acid chain; its full sequence is Holliday junction branch migration complex subunit RuvB (355 aa).

The tract at residues T4–Y190 is large ATPase domain (RuvB-L). ATP is bound by residues L29, R30, G71, K74, T75, T76, E137–Y139, R180, Y190, and R227. T75 is a binding site for Mg(2+). The small ATPAse domain (RuvB-S) stretch occupies residues D191–D261. A head domain (RuvB-H) region spans residues P264–Q355. DNA contacts are provided by R300, R319, and R324.

The protein belongs to the RuvB family. In terms of assembly, homohexamer. Forms an RuvA(8)-RuvB(12)-Holliday junction (HJ) complex. HJ DNA is sandwiched between 2 RuvA tetramers; dsDNA enters through RuvA and exits via RuvB. An RuvB hexamer assembles on each DNA strand where it exits the tetramer. Each RuvB hexamer is contacted by two RuvA subunits (via domain III) on 2 adjacent RuvB subunits; this complex drives branch migration. In the full resolvosome a probable DNA-RuvA(4)-RuvB(12)-RuvC(2) complex forms which resolves the HJ.

The protein resides in the cytoplasm. It catalyses the reaction ATP + H2O = ADP + phosphate + H(+). Functionally, the RuvA-RuvB-RuvC complex processes Holliday junction (HJ) DNA during genetic recombination and DNA repair, while the RuvA-RuvB complex plays an important role in the rescue of blocked DNA replication forks via replication fork reversal (RFR). RuvA specifically binds to HJ cruciform DNA, conferring on it an open structure. The RuvB hexamer acts as an ATP-dependent pump, pulling dsDNA into and through the RuvAB complex. RuvB forms 2 homohexamers on either side of HJ DNA bound by 1 or 2 RuvA tetramers; 4 subunits per hexamer contact DNA at a time. Coordinated motions by a converter formed by DNA-disengaged RuvB subunits stimulates ATP hydrolysis and nucleotide exchange. Immobilization of the converter enables RuvB to convert the ATP-contained energy into a lever motion, pulling 2 nucleotides of DNA out of the RuvA tetramer per ATP hydrolyzed, thus driving DNA branch migration. The RuvB motors rotate together with the DNA substrate, which together with the progressing nucleotide cycle form the mechanistic basis for DNA recombination by continuous HJ branch migration. Branch migration allows RuvC to scan DNA until it finds its consensus sequence, where it cleaves and resolves cruciform DNA. The sequence is that of Holliday junction branch migration complex subunit RuvB from Burkholderia multivorans (strain ATCC 17616 / 249).